We begin with the raw amino-acid sequence, 563 residues long: Chitinase A (563 aa).

The first 23 residues, 1–23 (MRKFNKPLLALLIGSTLCSAAQA), serve as a signal peptide directing secretion. One can recognise a GH18 domain in the interval 158–559 (KVVGSYFVEW…NSMNASLGNS (402 aa)). Glu315 functions as the Proton donor in the catalytic mechanism.

Belongs to the glycosyl hydrolase 18 family. Chitinase class II subfamily.

The catalysed reaction is Random endo-hydrolysis of N-acetyl-beta-D-glucosaminide (1-&gt;4)-beta-linkages in chitin and chitodextrins.. This is Chitinase A (chiA) from Serratia marcescens.